Here is a 200-residue protein sequence, read N- to C-terminus: Large ribosomal subunit protein uL4 (200 aa).

A disordered region spans residues 43 to 65; that stretch reads RAQKTRSEVSGGGAKPWRQKGTG.

This sequence belongs to the universal ribosomal protein uL4 family. In terms of assembly, part of the 50S ribosomal subunit.

Functionally, one of the primary rRNA binding proteins, this protein initially binds near the 5'-end of the 23S rRNA. It is important during the early stages of 50S assembly. It makes multiple contacts with different domains of the 23S rRNA in the assembled 50S subunit and ribosome. Its function is as follows. Forms part of the polypeptide exit tunnel. This is Large ribosomal subunit protein uL4 from Aliivibrio salmonicida (strain LFI1238) (Vibrio salmonicida (strain LFI1238)).